A 249-amino-acid chain; its full sequence is MPAAWPPRTVIRKSSGLRTLESALYRAGLGPVAGVDEVGRGACAGPLVVAACVLGPNRLESLAALDDSKKLNENERERLFPLIRRYALAYHVVFIPSQEVDRRGVHVANIEGMRRAVAGLSLRPGYVLSDGFRVPGLPMPSLPVVGGDAAAACIAAASVLAKVSRDRLMVAMEDEHPGYGFAEHKGYSTRAHSAALARLGPSSQHRYSFINVRRLVMDGEPEEHGEVGCGKMLVDMPVDGVLHEGQLSR.

One can recognise an RNase H type-2 domain in the interval 30-221; it reads GPVAGVDEVG…VRRLVMDGEP (192 aa). Asp36, Glu37, and Asp130 together coordinate a divalent metal cation.

This sequence belongs to the RNase HII family. The cofactor is Mn(2+). It depends on Mg(2+) as a cofactor.

The protein resides in the cytoplasm. The catalysed reaction is Endonucleolytic cleavage to 5'-phosphomonoester.. Functionally, endonuclease that specifically degrades the RNA of RNA-DNA hybrids. The sequence is that of Ribonuclease HII from Mycolicibacterium vanbaalenii (strain DSM 7251 / JCM 13017 / BCRC 16820 / KCTC 9966 / NRRL B-24157 / PYR-1) (Mycobacterium vanbaalenii).